A 244-amino-acid polypeptide reads, in one-letter code: ATP-dependent Clp protease ATP-binding subunit CLPT4, chloroplastic (244 aa).

The transit peptide at 1-64 (MQALQASRLT…WRSSGRVITR (64 aa)) directs the protein to the chloroplast. Over residues 30 to 48 (SRPISSGVSSSQELSSRSS) the composition is skewed to low complexity. Disordered stretches follow at residues 30–55 (SRPISSGVSSSQELSSRSSAPATKSW) and 220–244 (GRRYQLPDETEEAGPLKSEDDVSFL).

It belongs to the ClpA/ClpB family.

The protein resides in the plastid. The protein localises to the chloroplast. Accessory protein regulating the assembly of the plastid Clp protease system. The sequence is that of ATP-dependent Clp protease ATP-binding subunit CLPT4, chloroplastic from Chlamydomonas reinhardtii (Chlamydomonas smithii).